Consider the following 90-residue polypeptide: Envelope protein US9 (90 aa).

Topologically, residues 1-67 (MTSRLSDPNS…RRRRTRCVGM (67 aa)) are intravirion. An Internalization motif motif is present at residues 21 to 24 (YPTA). Positions 30 to 39 (EAYYSESEDE) are acidic. A phosphoserine; by host CK2 mark is found at Ser34 and Ser36. The chain crosses the membrane as a helical; Signal-anchor for type II membrane protein span at residues 68–88 (VIACLLVAVLSGGFGALLMWL). Residues 89-90 (LR) are Virion surface-facing.

It belongs to the alphaherpesvirinae envelope protein US9 family. Phosphorylated on serines within the acidic cluster, possibly by host CK2. Phosphorylation determines whether endocytosed viral US9 traffics to the trans-Golgi network or recycles to the cell membrane.

The protein resides in the virion membrane. The protein localises to the host Golgi apparatus membrane. It is found in the host smooth endoplasmic reticulum membrane. It localises to the host cell membrane. Essential for the anterograde spread of the infection throughout the host nervous system. Together with the gE/gI heterodimer, US9 is involved in the sorting and transport of viral structural components toward axon tips. The sequence is that of Envelope protein US9 from Homo sapiens (Human).